The sequence spans 115 residues: NAD(P)H-quinone oxidoreductase subunit M (115 aa).

It belongs to the complex I NdhM subunit family. In terms of assembly, NDH-1 can be composed of about 15 different subunits; different subcomplexes with different compositions have been identified which probably have different functions.

The protein localises to the cellular thylakoid membrane. It carries out the reaction a plastoquinone + NADH + (n+1) H(+)(in) = a plastoquinol + NAD(+) + n H(+)(out). The catalysed reaction is a plastoquinone + NADPH + (n+1) H(+)(in) = a plastoquinol + NADP(+) + n H(+)(out). Its function is as follows. NDH-1 shuttles electrons from an unknown electron donor, via FMN and iron-sulfur (Fe-S) centers, to quinones in the respiratory and/or the photosynthetic chain. The immediate electron acceptor for the enzyme in this species is believed to be plastoquinone. Couples the redox reaction to proton translocation, and thus conserves the redox energy in a proton gradient. Cyanobacterial NDH-1 also plays a role in inorganic carbon-concentration. The sequence is that of NAD(P)H-quinone oxidoreductase subunit M from Prochlorococcus marinus (strain NATL1A).